Here is a 141-residue protein sequence, read N- to C-terminus: Acetyltransferase ECA0875 (141 aa).

An N-acetyltransferase domain is found at 1-141 (MEIRIFRQDD…GKRLIEDREY (141 aa)).

It belongs to the acetyltransferase family. YpeA subfamily.

In Pectobacterium atrosepticum (strain SCRI 1043 / ATCC BAA-672) (Erwinia carotovora subsp. atroseptica), this protein is Acetyltransferase ECA0875.